We begin with the raw amino-acid sequence, 238 residues long: Probable transcriptional regulatory protein SPD_1725 (238 aa).

Belongs to the TACO1 family. YeeN subfamily.

Its subcellular location is the cytoplasm. The chain is Probable transcriptional regulatory protein SPD_1725 from Streptococcus pneumoniae serotype 2 (strain D39 / NCTC 7466).